A 421-amino-acid chain; its full sequence is 3-phosphoshikimate 1-carboxyvinyltransferase (421 aa).

Residues K20, S21, and R25 each coordinate 3-phosphoshikimate. K20 serves as a coordination point for phosphoenolpyruvate. Positions 90 and 117 each coordinate phosphoenolpyruvate. Residues S162, S163, Q164, S190, D304, and K331 each coordinate 3-phosphoshikimate. A phosphoenolpyruvate-binding site is contributed by Q164. D304 (proton acceptor) is an active-site residue. Residues R335 and R376 each coordinate phosphoenolpyruvate.

This sequence belongs to the EPSP synthase family. As to quaternary structure, monomer.

It localises to the cytoplasm. It carries out the reaction 3-phosphoshikimate + phosphoenolpyruvate = 5-O-(1-carboxyvinyl)-3-phosphoshikimate + phosphate. It participates in metabolic intermediate biosynthesis; chorismate biosynthesis. In terms of biological role, catalyzes the transfer of the enolpyruvyl moiety of phosphoenolpyruvate (PEP) to the 5-hydroxyl of shikimate-3-phosphate (S3P) to produce enolpyruvyl shikimate-3-phosphate and inorganic phosphate. The polypeptide is 3-phosphoshikimate 1-carboxyvinyltransferase (Methanothrix thermoacetophila (strain DSM 6194 / JCM 14653 / NBRC 101360 / PT) (Methanosaeta thermophila)).